Reading from the N-terminus, the 313-residue chain is Ribosomal RNA small subunit methyltransferase H (313 aa).

S-adenosyl-L-methionine is bound by residues 35-37 (GGH), aspartate 55, phenylalanine 80, aspartate 102, and glutamine 109.

It belongs to the methyltransferase superfamily. RsmH family.

The protein localises to the cytoplasm. It carries out the reaction cytidine(1402) in 16S rRNA + S-adenosyl-L-methionine = N(4)-methylcytidine(1402) in 16S rRNA + S-adenosyl-L-homocysteine + H(+). Specifically methylates the N4 position of cytidine in position 1402 (C1402) of 16S rRNA. This Shewanella sp. (strain MR-7) protein is Ribosomal RNA small subunit methyltransferase H.